A 231-amino-acid chain; its full sequence is Large ribosomal subunit protein uL1 (231 aa).

Belongs to the universal ribosomal protein uL1 family. In terms of assembly, part of the 50S ribosomal subunit.

Functionally, binds directly to 23S rRNA. The L1 stalk is quite mobile in the ribosome, and is involved in E site tRNA release. Its function is as follows. Protein L1 is also a translational repressor protein, it controls the translation of the L11 operon by binding to its mRNA. The protein is Large ribosomal subunit protein uL1 of Kosmotoga olearia (strain ATCC BAA-1733 / DSM 21960 / TBF 19.5.1).